Consider the following 448-residue polypeptide: Tryptophan--tRNA ligase (448 aa).

ATP-binding positions include 10–12 (TPT) and 18–19 (GN). The 'HIGH' region signature appears at 11 to 19 (PTGTPHLGN). Aspartate 143 is an L-tryptophan binding site. ATP contacts are provided by residues 155-157 (GRD), leucine 197, and 204-208 (KMSKS). A 'KMSKS' region motif is present at residues 204–208 (KMSKS).

It belongs to the class-I aminoacyl-tRNA synthetase family. Homodimer.

It is found in the cytoplasm. It catalyses the reaction tRNA(Trp) + L-tryptophan + ATP = L-tryptophyl-tRNA(Trp) + AMP + diphosphate + H(+). Its function is as follows. Catalyzes the attachment of tryptophan to tRNA(Trp). The chain is Tryptophan--tRNA ligase from Pseudomonas aeruginosa (strain ATCC 15692 / DSM 22644 / CIP 104116 / JCM 14847 / LMG 12228 / 1C / PRS 101 / PAO1).